The following is a 264-amino-acid chain: 3-methyl-2-oxobutanoate hydroxymethyltransferase (264 aa).

The Mg(2+) site is built by Asp45 and Asp84. 3-methyl-2-oxobutanoate contacts are provided by residues 45–46 (DS), Asp84, and Lys112. Glu114 lines the Mg(2+) pocket. The Proton acceptor role is filled by Glu181.

It belongs to the PanB family. Homodecamer; pentamer of dimers. The cofactor is Mg(2+).

The protein localises to the cytoplasm. It catalyses the reaction 3-methyl-2-oxobutanoate + (6R)-5,10-methylene-5,6,7,8-tetrahydrofolate + H2O = 2-dehydropantoate + (6S)-5,6,7,8-tetrahydrofolate. The protein operates within cofactor biosynthesis; (R)-pantothenate biosynthesis; (R)-pantoate from 3-methyl-2-oxobutanoate: step 1/2. Functionally, catalyzes the reversible reaction in which hydroxymethyl group from 5,10-methylenetetrahydrofolate is transferred onto alpha-ketoisovalerate to form ketopantoate. The polypeptide is 3-methyl-2-oxobutanoate hydroxymethyltransferase (Edwardsiella ictaluri (strain 93-146)).